The chain runs to 252 residues: Ribosomal RNA small subunit methyltransferase J (252 aa).

Residues Arg101–Asp102, Glu117–Arg118, Ser153–Ser154, and Asp171 contribute to the S-adenosyl-L-methionine site.

Belongs to the methyltransferase superfamily. RsmJ family.

The protein localises to the cytoplasm. The catalysed reaction is guanosine(1516) in 16S rRNA + S-adenosyl-L-methionine = N(2)-methylguanosine(1516) in 16S rRNA + S-adenosyl-L-homocysteine + H(+). In terms of biological role, specifically methylates the guanosine in position 1516 of 16S rRNA. In Pseudoalteromonas translucida (strain TAC 125), this protein is Ribosomal RNA small subunit methyltransferase J.